The chain runs to 294 residues: Endolytic peptidoglycan transglycosylase RlpA (294 aa).

An N-terminal signal peptide occupies residues 1 to 23; that stretch reads MKQKIFQILTALCCIFYVMSAQA. The SPOR domain occupies 216–291; sequence EKYTTVYKIR…NYSKPLIVYT (76 aa).

This sequence belongs to the RlpA family.

Its function is as follows. Lytic transglycosylase with a strong preference for naked glycan strands that lack stem peptides. The chain is Endolytic peptidoglycan transglycosylase RlpA from Pasteurella multocida (strain Pm70).